Reading from the N-terminus, the 435-residue chain is Zinc metalloproteinase/disintegrin (435 aa).

Positions 1–26 (KMCGVTQNWESYESTKKASQLNLTPE) are excised as a propeptide. The residue at position 27 (Gln27) is a Pyrrolidone carboxylic acid. In terms of domain architecture, Peptidase M12B spans 33 to 227 (RYIKLGIFVD…HNFQCILNAP (195 aa)). An N-linked (GlcNAc...) asparagine glycan is attached at Asn115. Cystine bridges form between Cys144–Cys222, Cys184–Cys206, and Cys186–Cys189. Residue His169 participates in Zn(2+) binding. Glu170 is a catalytic residue. Zn(2+) contacts are provided by His173 and His179. Residues 228–243 (LRTDTVSTPVSGNELL) constitute a propeptide that is removed on maturation. The Disintegrin domain occupies 235-318 (TPVSGNELLE…DCPTDDFHRN (84 aa)). 6 residues coordinate Ca(2+): Val237, Asn240, Leu242, Glu244, Glu247, and Asp250. 6 disulfides stabilise this stretch: Cys249–Cys264, Cys251–Cys259, Cys258–Cys281, Cys272–Cys278, Cys277–Cys303, and Cys290–Cys310. The short motif at 296 to 298 (ECD) is the D/ECD-tripeptide element.

Belongs to the venom metalloproteinase (M12B) family. P-III subfamily. P-IIIb sub-subfamily. As to quaternary structure, monomer. Zn(2+) is required as a cofactor. In terms of processing, the N-terminus of the metalloproteinase is blocked. In terms of tissue distribution, expressed by the venom gland.

Its subcellular location is the secreted. With respect to regulation, inhibited by EDTA. Cleaves the alpha chain of fibrinogen (FGA) preferentially and cleaves the beta chain (FGB) either on longer incubation or at high concentrations. Induces apoptosis of endothelial cells (prior to cell detachment). In terms of biological role, disintegrin: inhibits platelet aggregation induced by ADP, thrombin, platelet-activating factor and collagen. Acts by inhibiting fibrinogen interaction with platelet receptors GPIIb/GPIIIa (ITGA2B/ITGB3). The polypeptide is Zinc metalloproteinase/disintegrin (Craspedocephalus gramineus (Bamboo pit viper)).